A 332-amino-acid polypeptide reads, in one-letter code: Geranylgeranyl pyrophosphate synthase 2 (332 aa).

3 residues coordinate isopentenyl diphosphate: Lys-55, Arg-58, and His-87. Mg(2+) is bound by residues Asp-94 and Asp-98. Dimethylallyl diphosphate is bound at residue Arg-103. Arg-104 is a binding site for isopentenyl diphosphate. Dimethylallyl diphosphate is bound by residues Lys-181, Thr-182, and Gln-218. A Mg(2+)-binding site is contributed by Asp-221. 3 residues coordinate dimethylallyl diphosphate: Asn-225, Lys-235, and Lys-245.

It belongs to the FPP/GGPP synthase family. Requires Mg(2+) as cofactor.

It catalyses the reaction isopentenyl diphosphate + dimethylallyl diphosphate = (2E)-geranyl diphosphate + diphosphate. The enzyme catalyses isopentenyl diphosphate + (2E)-geranyl diphosphate = (2E,6E)-farnesyl diphosphate + diphosphate. It carries out the reaction isopentenyl diphosphate + (2E,6E)-farnesyl diphosphate = (2E,6E,10E)-geranylgeranyl diphosphate + diphosphate. Its function is as follows. Geranylgeranyl pyrophosphate synthase; part of the gene cluster 3 that mediates the biosynthesis of an isoprenoid secondary metabolite. This Zymoseptoria tritici (strain CBS 115943 / IPO323) (Speckled leaf blotch fungus) protein is Geranylgeranyl pyrophosphate synthase 2 (GGS2).